The sequence spans 37 residues: Large ribosomal subunit protein bL36 (37 aa).

It belongs to the bacterial ribosomal protein bL36 family.

In Sulfurovum sp. (strain NBC37-1), this protein is Large ribosomal subunit protein bL36.